We begin with the raw amino-acid sequence, 388 residues long: G2/mitotic-specific cyclin-B (388 aa).

This sequence belongs to the cyclin family. Cyclin AB subfamily. Interacts with the CDK1 protein kinase to form a serine/threonine kinase holoenzyme complex also known as maturation promoting factor (MPF). The cyclin subunit imparts substrate specificity to the complex.

Essential for the control of the cell cycle at the G2/M (mitosis) transition. The polypeptide is G2/mitotic-specific cyclin-B (Marthasterias glacialis (Spiny starfish)).